The sequence spans 268 residues: NAC domain-containing protein 41 (268 aa).

The 146-residue stretch at 15–160 (LPPGFRFHPT…NWVLCRVFLK (146 aa)) folds into the NAC domain. Residues 109–166 (VGMKKTLVFYKGKPPNGTRTNWVLHEYRLVDSQQDSLYGQNMNWVLCRVFLKKRSNSN) mediate DNA binding. Residues 166-190 (NSKRKEDEKEEVENEKETETERERE) are disordered. Positions 180 to 190 (EKETETERERE) are enriched in basic and acidic residues.

It is found in the nucleus. Its function is as follows. Transcription activator of the mannan synthase CSLA9. Recognizes and binds to DNA-specific sequence of CSLA9 promoter. The polypeptide is NAC domain-containing protein 41 (Arabidopsis thaliana (Mouse-ear cress)).